Reading from the N-terminus, the 1710-residue chain is MLPTILSISYEHTYAYLSKYQTAYACEGKKLTIECEPGDVINLIRANYGRFSITICNDHGNVEWSVNCMFPKSLSVLNSRCAHKQSCGVLAATSMFGDPCPGTHKYLEAHYQCISAAQTSTTTNRPSPPPWVLSNGPPIFGNGSGLIHPPGIGAGAPPPPRLPTLPGVVGISGNPGLFNVPPQHTAVTHSTPSSSTTAMAGGRLKGVATSTTTTKHPAGRHDGLPPPPQLHHHHNHHGEDTASPTKPSSKLPAGGNATSPSNTRILTGVGGSGTDDGTLLTTKSSPNRTPGTAASGSVVPGNGSVVRTINNINLNSAGMSGGDDESKLFCGPTHARNLYWNMTRVGDVNVQPCPGGAAGIAKWRCVLMKRMPDSGYDEYDDDPSSTTPATSSADCLHNSSSCEPPVSMAHKVNQRLRNFEPTWHPTTPDLTQCRSLWLNNLEMRVNQRDSSLISIANDMSEVTSSKTLYGGDMLVTTKIIQTVSEKMLHDKETFPDQRQREAMIMELLHCVVKTGSNLLDESQLSSWLDLNPEDQMRVATSLLTGLEYNAFLLADTIIRERSVVQKVKNILLSVRVLETKTIQSSVVFPDSDQWPLSSDRIELPRAALIDNSEGGLVRIVFAAFDRLESILKPSYDHFDLKSSRSYVRNTAILSNDSDVNAGEIQQRLRILNSKVISASLGKGRHIQLSQPITLTLKHLKTENVTNPTCVFWNYIDHAWSANGCSLESTNRTHSVCSCNHLTNFAILMDVVDEHQHSLFTMFDGNMRIFIYISIGICVVFIVIALLTLKLFNGVFVKSARTSIYTSIYLCLLAIELLFLLGIEQTETSIFCGFITIFLHCAILSGTAWFCYEAFHSYSTLTSDELLLEVDQTPKVNCYYLLSYGLSLSVVAISLVIDPSTYTQNDYCVLMEANALFYATFVMPVLVFFVAAIGYTFLSWIIMCRKSRTGLKTKEHTRLASVRFDIRCSFVFLLLLSAVWCSAYFYLRGAKMDDDTADVYGYCFICFNTLLGLYIFVFHCIQNEKIRREYRKYVRQHAWLPKCLRCSKTSISSGIVTGNGPTAGTLCSVSTSKKPKLPIGVSEEAHDDPQQQQQTPVPITEDAIMGASSDCELNEAQQRRTLKSGLMTGTLQAPPQTLGGHVVLERGSTLRSTGHASPTSSAGSTHLIFAHKQQQQQQQQGPLGESYYHQPDYYSWKQPPTGTGGLKTPREYYNNTGAAASSPQQAHEVFYWTQKPNSGQHGKKKRGAGGVPASPSGSLHSRTAAASQVLFYPSYKKTKAGQPTGYPQYAEALDPPLATGNAAAYYQQQQQLRRQQLHLQQQQQQQQQLSSDEEQVEQHAHLLQLQRRAGSQQQLPAPPPHMAQYQQEFMQRQYRNKQSNCDLGMGDAYYNQGSVGGADGGPVYEEILSNRNSDVQHYEVGDFDVDEVYNNSVGTGVFNNMRAAVAAGGSRYGGGSLSGGSVSSRSQQQQLKKQQQQQSLAQQRSARRCTADDDDDEDEEEDEEATAAEQLHDSVCDEDEEEDESDLEDDAHGLPPQSDERMRRLMAMQDEDFKRRFQRQLRKHGAPLDYGALPPGAGPQPEHNGAVFGVSGGVGEGSKRGAFRQQQQALNAKSPGGRLAVNDLFGHGNSGPPLPPANQTPAQKRQQLQKLSPQSTTSSSSHTSHSNPNPHPHQLTHPHPHQHPPHHQQRHLSAMLDENNTVRCYLEPLAK.

Over 1–767 the chain is Extracellular; sequence MLPTILSISY…LFTMFDGNMR (767 aa). An SUEL-type lectin domain is found at 25–114; it reads ACEGKKLTIE…KYLEAHYQCI (90 aa). An N-linked (GlcNAc...) asparagine glycan is attached at asparagine 142. A disordered region spans residues 183-304; sequence QHTAVTHSTP…SGSVVPGNGS (122 aa). Composition is skewed to polar residues over residues 185 to 198 and 256 to 265; these read TAVT…STTA and NATSPSNTRI. Residue asparagine 256 is glycosylated (N-linked (GlcNAc...) asparagine). 2 stretches are compositionally biased toward low complexity: residues 275 to 285 and 295 to 304; these read DDGTLLTTKSS and SGSVVPGNGS. N-linked (GlcNAc...) asparagine glycosylation is found at asparagine 302 and asparagine 341. The interval 376 to 400 is disordered; sequence YDEYDDDPSSTTPATSSADCLHNSS. Over residues 384-394 the composition is skewed to low complexity; sequence SSTTPATSSAD. Asparagine 398, asparagine 655, asparagine 703, and asparagine 730 each carry an N-linked (GlcNAc...) asparagine glycan. Residues 561–754 form the GAIN-B domain; sequence RSVVQKVKNI…AILMDVVDEH (194 aa). Cystine bridges form between cysteine 709-cysteine 736 and cysteine 724-cysteine 738. The interval 709 to 754 is GPS; it reads CVFWNYIDHAWSANGCSLESTNRTHSVCSCNHLTNFAILMDVVDEH. Residues 768–788 traverse the membrane as a helical segment; sequence IFIYISIGICVVFIVIALLTL. The Cytoplasmic segment spans residues 789 to 801; that stretch reads KLFNGVFVKSART. A helical membrane pass occupies residues 802–822; that stretch reads SIYTSIYLCLLAIELLFLLGI. The Extracellular segment spans residues 823 to 828; sequence EQTETS. The helical transmembrane segment at 829-849 threads the bilayer; that stretch reads IFCGFITIFLHCAILSGTAWF. The Cytoplasmic portion of the chain corresponds to 850–875; the sequence is CYEAFHSYSTLTSDELLLEVDQTPKV. The chain crosses the membrane as a helical span at residues 876-896; that stretch reads NCYYLLSYGLSLSVVAISLVI. Over 897–920 the chain is Extracellular; sequence DPSTYTQNDYCVLMEANALFYATF. The chain crosses the membrane as a helical span at residues 921–941; sequence VMPVLVFFVAAIGYTFLSWII. Topologically, residues 942–968 are cytoplasmic; sequence MCRKSRTGLKTKEHTRLASVRFDIRCS. A helical transmembrane segment spans residues 969–989; that stretch reads FVFLLLLSAVWCSAYFYLRGA. Residues 990 to 999 are Extracellular-facing; that stretch reads KMDDDTADVY. The helical transmembrane segment at 1000–1020 threads the bilayer; sequence GYCFICFNTLLGLYIFVFHCI. Residues 1021-1710 are Cytoplasmic-facing; that stretch reads QNEKIRREYR…VRCYLEPLAK (690 aa). Phosphoserine is present on residues serine 1156, serine 1253, serine 1260, serine 1329, and serine 1330. The tract at residues 1234–1259 is disordered; sequence KPNSGQHGKKKRGAGGVPASPSGSLH. Disordered regions lie at residues 1452 to 1540 and 1568 to 1690; these read GGGS…SDER and DYGA…QQRH. Residues 1458 to 1483 show a composition bias toward low complexity; that stretch reads GGSVSSRSQQQQLKKQQQQQSLAQQR. Acidic residues-rich tracts occupy residues 1491–1505 and 1515–1528; these read DDDD…EEAT and CDED…DLED. Over residues 1638-1650 the composition is skewed to polar residues; sequence QTPAQKRQQLQKL. The span at 1651–1672 shows a compositional bias: low complexity; the sequence is SPQSTTSSSSHTSHSNPNPHPH. The segment covering 1673–1689 has biased composition (basic residues); sequence QLTHPHPHQHPPHHQQR.

The protein belongs to the G-protein coupled receptor 2 family. LN-TM7 subfamily. As to quaternary structure, forms a heterodimer, consisting of a large extracellular region non-covalently linked to a seven-transmembrane moiety. Post-translationally, proteolytically cleaved into 2 subunits, an extracellular subunit and a seven-transmembrane subunit.

The protein localises to the cell membrane. The sequence is that of Latrophilin Cirl from Drosophila erecta (Fruit fly).